The chain runs to 138 residues: MAEKLKVDLVTPYKKILSEEVDEITATGALGEFSVLPGHAPFLTSLKIGELTYKKGGQFFHLAVNWGYFEVEDDKVTVLVETAERADEIDLERAKAALGRAEAALKGLSPEDKSYKTQEAALERALIRMQVAGKSTRK.

Belongs to the ATPase epsilon chain family. In terms of assembly, F-type ATPases have 2 components, CF(1) - the catalytic core - and CF(0) - the membrane proton channel. CF(1) has five subunits: alpha(3), beta(3), gamma(1), delta(1), epsilon(1). CF(0) has three main subunits: a, b and c.

It is found in the cell inner membrane. Functionally, produces ATP from ADP in the presence of a proton gradient across the membrane. This is ATP synthase epsilon chain from Geobacter metallireducens (strain ATCC 53774 / DSM 7210 / GS-15).